The chain runs to 139 residues: SPbeta prophage-derived uncharacterized protein YomN (139 aa).

The chain is SPbeta prophage-derived uncharacterized protein YomN (yomN) from Bacillus subtilis (strain 168).